We begin with the raw amino-acid sequence, 547 residues long: Large cysteine-rich periplasmic protein OmcB, serovar E (547 aa).

The first 22 residues, 1–22 (MNKLIRRAVTIFAVTSVASLFA), serve as a signal peptide directing secretion. The propeptide occupies 23–40 (SGVLETSMAESLSTNVIS). The segment at 46–83 (AKDNTSHKSKKARKNHSKETLVDRKEVAPVHESKATGP) is disordered. The span at 52–61 (HKSKKARKNH) shows a compositional bias: basic residues. The span at 62 to 79 (SKETLVDRKEVAPVHESK) shows a compositional bias: basic and acidic residues.

Part of a disulfide cross-linked outer membrane complex (COMC) composed of the major outer membrane porin (MOMP), the small cysteine-rich protein (OmcA) and the large cysteine-rich periplasmic protein (OmcB).

The protein resides in the periplasm. Its function is as follows. In elementary bodies (EBs, the infectious stage, which is able to survive outside the host cell) provides the structural integrity of the outer envelope through disulfide cross-links with the small cysteine-rich protein and the major outer membrane protein. It has been described in publications as the Sarkosyl-insoluble COMC (Chlamydia outer membrane complex), and serves as the functional equivalent of peptidoglycan. This Chlamydia trachomatis protein is Large cysteine-rich periplasmic protein OmcB, serovar E (omcB).